The chain runs to 149 residues: uncharacterized protein (149 aa).

Positions 1–149 constitute an N-acetyltransferase domain; sequence MNIRQAKTSD…VHYCLNVPAK (149 aa).

The protein belongs to the acetyltransferase family.

This is an uncharacterized protein from Bacillus subtilis (strain 168).